A 212-amino-acid chain; its full sequence is Thymidylate kinase (212 aa).

An N-acetylalanine modification is found at Ala2. ATP-binding positions include 16–21 (RAGKTT) and Arg97. The interval 133-157 (LQLQLLDAAARGEFGLERYETGTFQ) is LID. Lys182 and Arg192 together coordinate ATP.

Belongs to the thymidylate kinase family. Homodimer. The cofactor is Mg(2+).

The enzyme catalyses dTMP + ATP = dTDP + ADP. Its pathway is pyrimidine metabolism; dTTP biosynthesis. Its function is as follows. Catalyzes the phosphorylation of thymidine monophosphate (dTMP) to thymidine diphosphate (dTDP), the immediate precursor for the DNA building block dTTP, with ATP as the preferred phosphoryl donor in the presence of Mg(2+). The polypeptide is Thymidylate kinase (Dtymk) (Mus musculus (Mouse)).